A 314-amino-acid polypeptide reads, in one-letter code: Thymidylate synthase (314 aa).

Residues Arg21 and 176–177 (RR) each bind dUMP. The active-site Nucleophile is Cys196. Residues 216 to 219 (RSAD), Asn227, and 257 to 259 (HLY) contribute to the dUMP site. (6R)-5,10-methylene-5,6,7,8-tetrahydrofolate is bound at residue Asp219. Ser313 serves as a coordination point for (6R)-5,10-methylene-5,6,7,8-tetrahydrofolate.

It belongs to the thymidylate synthase family. Bacterial-type ThyA subfamily. Homodimer.

The protein resides in the cytoplasm. It carries out the reaction dUMP + (6R)-5,10-methylene-5,6,7,8-tetrahydrofolate = 7,8-dihydrofolate + dTMP. The protein operates within pyrimidine metabolism; dTTP biosynthesis. Catalyzes the reductive methylation of 2'-deoxyuridine-5'-monophosphate (dUMP) to 2'-deoxythymidine-5'-monophosphate (dTMP) while utilizing 5,10-methylenetetrahydrofolate (mTHF) as the methyl donor and reductant in the reaction, yielding dihydrofolate (DHF) as a by-product. This enzymatic reaction provides an intracellular de novo source of dTMP, an essential precursor for DNA biosynthesis. This chain is Thymidylate synthase, found in Listeria monocytogenes serovar 1/2a (strain ATCC BAA-679 / EGD-e).